Consider the following 33-residue polypeptide: KWKVFKKIEKVGRNIRDGIVKAGPAIAVLGQAN.

Lys21 bears the 5-hydroxylysine mark.

In terms of assembly, monomer. In terms of tissue distribution, hemolymph.

It is found in the secreted. Functionally, cecropins have lytic and antibacterial activity against several Gram-positive and Gram-negative bacteria. Also has activity against fungi. In Heliothis virescens (Tobacco budworm moth), this protein is Cecropin-B.